We begin with the raw amino-acid sequence, 118 residues long: Phosphoribosyl-AMP cyclohydrolase (118 aa).

Mg(2+) is bound at residue aspartate 85. Residue cysteine 86 participates in Zn(2+) binding. Mg(2+) contacts are provided by aspartate 87 and aspartate 89. The Zn(2+) site is built by cysteine 102 and cysteine 109.

The protein belongs to the PRA-CH family. In terms of assembly, homodimer. Mg(2+) is required as a cofactor. Zn(2+) serves as cofactor.

The protein resides in the cytoplasm. It catalyses the reaction 1-(5-phospho-beta-D-ribosyl)-5'-AMP + H2O = 1-(5-phospho-beta-D-ribosyl)-5-[(5-phospho-beta-D-ribosylamino)methylideneamino]imidazole-4-carboxamide. It participates in amino-acid biosynthesis; L-histidine biosynthesis; L-histidine from 5-phospho-alpha-D-ribose 1-diphosphate: step 3/9. Its function is as follows. Catalyzes the hydrolysis of the adenine ring of phosphoribosyl-AMP. The chain is Phosphoribosyl-AMP cyclohydrolase from Sulfurisphaera tokodaii (strain DSM 16993 / JCM 10545 / NBRC 100140 / 7) (Sulfolobus tokodaii).